The following is a 296-amino-acid chain: Maltose/maltodextrin transport system permease protein MalG (296 aa).

At 1–12 (MAMVQPKSQKLR) the chain is on the cytoplasmic side. Residues 13–35 (LLITHLGLLIFIAAIMFPLLMVI) traverse the membrane as a helical segment. Residues 36–88 (AISLREGNFATGSLIPDKISWEHWRLALGFSVEHADGRVTPPPFPVLLWLWNS) lie on the Periplasmic side of the membrane. An ABC transmembrane type-1 domain is found at 85 to 281 (LWNSVKIAGI…IPITLVFLLA (197 aa)). The helical transmembrane segment at 89 to 111 (VKIAGITAIGIVALSTTCAYAFA) threads the bilayer. Over 112-123 (RMRFPGKATLLK) the chain is Cytoplasmic. The chain crosses the membrane as a helical span at residues 124–143 (GMLIFQMFPAVLSLVALYAL). The Periplasmic segment spans residues 144-152 (FDRLGQYIP). The helical transmembrane segment at 153 to 175 (FIGLNTHGGVIFAYLGGIALHVW) threads the bilayer. The Cytoplasmic segment spans residues 176 to 204 (TIKGYFETIDSSLEEAAALDGATPWQAFR). The helical transmembrane segment at 205–227 (LVLLPLSVPILAVVFILSFIAAI) threads the bilayer. Topologically, residues 228–257 (TEVPVASLLLRDVDSYTLAVGMQQYLNPQN) are periplasmic. The helical transmembrane segment at 258–280 (YLWGDFAAAAVLSAIPITLVFLL) threads the bilayer. Topologically, residues 281-296 (AQRWLVNGLTAGGVKG) are cytoplasmic.

This sequence belongs to the binding-protein-dependent transport system permease family. MalFG subfamily. As to quaternary structure, the complex is composed of two ATP-binding proteins (MalK), two transmembrane proteins (MalG and MalF) and a solute-binding protein (MalE).

Its subcellular location is the cell inner membrane. Its function is as follows. Part of the ABC transporter complex MalEFGK involved in maltose/maltodextrin import. Probably responsible for the translocation of the substrate across the membrane. In Salmonella typhimurium (strain LT2 / SGSC1412 / ATCC 700720), this protein is Maltose/maltodextrin transport system permease protein MalG (malG).